Here is a 276-residue protein sequence, read N- to C-terminus: 3-methyl-2-oxobutanoate hydroxymethyltransferase (276 aa).

Positions 50 and 89 each coordinate Mg(2+). Residues 50-51, D89, and K119 contribute to the 3-methyl-2-oxobutanoate site; that span reads DS. Residue E121 coordinates Mg(2+). The active-site Proton acceptor is E188.

Belongs to the PanB family. Homodecamer; pentamer of dimers. It depends on Mg(2+) as a cofactor.

Its subcellular location is the cytoplasm. The enzyme catalyses 3-methyl-2-oxobutanoate + (6R)-5,10-methylene-5,6,7,8-tetrahydrofolate + H2O = 2-dehydropantoate + (6S)-5,6,7,8-tetrahydrofolate. Its pathway is cofactor biosynthesis; (R)-pantothenate biosynthesis; (R)-pantoate from 3-methyl-2-oxobutanoate: step 1/2. In terms of biological role, catalyzes the reversible reaction in which hydroxymethyl group from 5,10-methylenetetrahydrofolate is transferred onto alpha-ketoisovalerate to form ketopantoate. The chain is 3-methyl-2-oxobutanoate hydroxymethyltransferase from Paracoccus denitrificans (strain Pd 1222).